A 312-amino-acid polypeptide reads, in one-letter code: DNA-directed RNA polymerase subunit alpha (312 aa).

The interval 1–226 (MIEFEKPNIT…EHLNLFTNLT (226 aa)) is alpha N-terminal domain (alpha-NTD). Residues 243–312 (DDRILERTIE…DLGLGLKNDK (70 aa)) are alpha C-terminal domain (alpha-CTD).

The protein belongs to the RNA polymerase alpha chain family. Homodimer. The RNAP catalytic core consists of 2 alpha, 1 beta, 1 beta' and 1 omega subunit. When a sigma factor is associated with the core the holoenzyme is formed, which can initiate transcription.

It catalyses the reaction RNA(n) + a ribonucleoside 5'-triphosphate = RNA(n+1) + diphosphate. Functionally, DNA-dependent RNA polymerase catalyzes the transcription of DNA into RNA using the four ribonucleoside triphosphates as substrates. The sequence is that of DNA-directed RNA polymerase subunit alpha from Streptococcus sanguinis (strain SK36).